A 222-amino-acid polypeptide reads, in one-letter code: Probable transcriptional regulator ycf29 (222 aa).

The region spanning 4–120 is the Response regulatory domain; it reads KLMLVENDIV…ELLSIINNLI (117 aa). The residue at position 53 (aspartate 53) is a 4-aspartylphosphate. In terms of domain architecture, HTH luxR-type spans 139 to 204; that stretch reads QLNHKIRLTP…LLVKYSINNN (66 aa). Positions 163–182 form a DNA-binding region, H-T-H motif; sequence NKEISTILNTSVRNVEKYVS.

It is found in the plastid. Its subcellular location is the chloroplast. The sequence is that of Probable transcriptional regulator ycf29 (ycf29) from Pyropia yezoensis (Susabi-nori).